The primary structure comprises 1010 residues: Glycine--tRNA ligase (1010 aa).

Positions 1-312 are glycine--tRNA ligase alpha subunit; sequence MSEHPLTLQS…TSESVVPMIS (312 aa). The segment at 313 to 1010 is glycine--tRNA ligase beta subunit; that stretch reads STEDLLLEIG…SLCHWESVAV (698 aa).

The protein belongs to the class-II aminoacyl-tRNA synthetase family.

The protein resides in the cytoplasm. The catalysed reaction is tRNA(Gly) + glycine + ATP = glycyl-tRNA(Gly) + AMP + diphosphate. The chain is Glycine--tRNA ligase (glyQS) from Chlamydia pneumoniae (Chlamydophila pneumoniae).